The chain runs to 160 residues: Ribosomal RNA large subunit methyltransferase H (160 aa).

Residues Leu76, Gly108, and 127 to 132 (LGKMTW) each bind S-adenosyl-L-methionine.

It belongs to the RNA methyltransferase RlmH family. Homodimer.

It is found in the cytoplasm. It catalyses the reaction pseudouridine(1915) in 23S rRNA + S-adenosyl-L-methionine = N(3)-methylpseudouridine(1915) in 23S rRNA + S-adenosyl-L-homocysteine + H(+). Functionally, specifically methylates the pseudouridine at position 1915 (m3Psi1915) in 23S rRNA. The polypeptide is Ribosomal RNA large subunit methyltransferase H (Rhizobium etli (strain CIAT 652)).